A 272-amino-acid chain; its full sequence is Dermonecrotic toxin SpeSicTox-betaIB1a (272 aa).

His5 is a catalytic residue. Glu25 and Asp27 together coordinate Mg(2+). The Nucleophile role is filled by His41. Intrachain disulfides connect Cys45/Cys51 and Cys47/Cys191. Asp85 contributes to the Mg(2+) binding site.

Belongs to the arthropod phospholipase D family. Class II subfamily. The cofactor is Mg(2+). In terms of tissue distribution, expressed by the venom gland.

Its subcellular location is the secreted. The catalysed reaction is an N-(acyl)-sphingosylphosphocholine = an N-(acyl)-sphingosyl-1,3-cyclic phosphate + choline. It carries out the reaction an N-(acyl)-sphingosylphosphoethanolamine = an N-(acyl)-sphingosyl-1,3-cyclic phosphate + ethanolamine. It catalyses the reaction a 1-acyl-sn-glycero-3-phosphocholine = a 1-acyl-sn-glycero-2,3-cyclic phosphate + choline. The enzyme catalyses a 1-acyl-sn-glycero-3-phosphoethanolamine = a 1-acyl-sn-glycero-2,3-cyclic phosphate + ethanolamine. Its function is as follows. Dermonecrotic toxins cleave the phosphodiester linkage between the phosphate and headgroup of certain phospholipids (sphingolipid and lysolipid substrates), forming an alcohol (often choline) and a cyclic phosphate. This toxin acts on sphingomyelin (SM). It may also act on ceramide phosphoethanolamine (CPE), lysophosphatidylcholine (LPC) and lysophosphatidylethanolamine (LPE), but not on lysophosphatidylserine (LPS), and lysophosphatidylglycerol (LPG). It acts by transphosphatidylation, releasing exclusively cyclic phosphate products as second products. Induces dermonecrosis, hemolysis, increased vascular permeability, edema, inflammatory response, and platelet aggregation. This Sicarius peruensis (Six-eyed sand spider) protein is Dermonecrotic toxin SpeSicTox-betaIB1a.